The chain runs to 200 residues: LexA repressor (200 aa).

Catalysis depends on for autocatalytic cleavage activity residues serine 121 and lysine 158.

The protein belongs to the peptidase S24 family. As to quaternary structure, homodimer.

It carries out the reaction Hydrolysis of Ala-|-Gly bond in repressor LexA.. Its function is as follows. Binds a consensus sequence 5'-TGTTC-N(4)-GAACA-3'; some genes have a tandem consensus sequence and their binding is cooperative. Binds to the promoters of a number of genes, including lexA and splB. Represses a number of genes involved in the response to DNA damage (SOS response). This Opitutus terrae (strain DSM 11246 / JCM 15787 / PB90-1) protein is LexA repressor.